We begin with the raw amino-acid sequence, 398 residues long: ATP-dependent RNA helicase eIF4A (398 aa).

Residues 25–53 (DSFDSMELKPELLRGVYAYGFERPSAIQQ) carry the Q motif motif. The Helicase ATP-binding domain occupies 56–226 (ILPIVKGNDV…TKFMRDPVRI (171 aa)). 69-76 (AQSGTGKT) lines the ATP pocket. The DEAD box signature appears at 174-177 (DEAD). The 162-residue stretch at 237 to 398 (GIKQFYIAVE…EMPMNVADLI (162 aa)) folds into the Helicase C-terminal domain.

It belongs to the DEAD box helicase family. eIF4A subfamily. As to quaternary structure, component of the eIF4F complex, which composition varies with external and internal environmental conditions. It is composed of at least eIF4A, eIF4E and eIF4G.

The protein localises to the cytoplasm. It carries out the reaction ATP + H2O = ADP + phosphate + H(+). Functionally, ATP-dependent RNA helicase which is a subunit of the eIF4F complex involved in cap recognition and is required for mRNA binding to ribosome. In the current model of translation initiation, eIF4A unwinds RNA secondary structures in the 5'-UTR of mRNAs which is necessary to allow efficient binding of the small ribosomal subunit, and subsequent scanning for the initiator codon. The polypeptide is ATP-dependent RNA helicase eIF4A (tif1) (Emericella nidulans (strain FGSC A4 / ATCC 38163 / CBS 112.46 / NRRL 194 / M139) (Aspergillus nidulans)).